A 130-amino-acid chain; its full sequence is Small ribosomal subunit protein uS8 (130 aa).

Belongs to the universal ribosomal protein uS8 family. In terms of assembly, part of the 30S ribosomal subunit. Contacts proteins S5 and S12.

One of the primary rRNA binding proteins, it binds directly to 16S rRNA central domain where it helps coordinate assembly of the platform of the 30S subunit. The chain is Small ribosomal subunit protein uS8 from Pectobacterium atrosepticum (strain SCRI 1043 / ATCC BAA-672) (Erwinia carotovora subsp. atroseptica).